We begin with the raw amino-acid sequence, 153 residues long: Aspartate carbamoyltransferase regulatory chain (153 aa).

Zn(2+) contacts are provided by Cys109, Cys114, Cys138, and Cys141.

This sequence belongs to the PyrI family. As to quaternary structure, contains catalytic and regulatory chains. It depends on Zn(2+) as a cofactor.

In terms of biological role, involved in allosteric regulation of aspartate carbamoyltransferase. The protein is Aspartate carbamoyltransferase regulatory chain of Vibrio campbellii (strain ATCC BAA-1116).